Consider the following 404-residue polypeptide: Formate-dependent phosphoribosylglycinamide formyltransferase (404 aa).

N(1)-(5-phospho-beta-D-ribosyl)glycinamide-binding positions include 25 to 26 (EL) and E85. Residues R118, K159, 164-169 (SSGKGQ), 199-202 (EGFV), and E207 contribute to the ATP site. Residues 123–318 (RLAAEELGLP…EFELHARAIL (196 aa)) enclose the ATP-grasp domain. The Mg(2+) site is built by E277 and E289. Residues D296, K365, and 372 to 373 (RR) each bind N(1)-(5-phospho-beta-D-ribosyl)glycinamide.

It belongs to the PurK/PurT family. As to quaternary structure, homodimer.

The catalysed reaction is N(1)-(5-phospho-beta-D-ribosyl)glycinamide + formate + ATP = N(2)-formyl-N(1)-(5-phospho-beta-D-ribosyl)glycinamide + ADP + phosphate + H(+). The protein operates within purine metabolism; IMP biosynthesis via de novo pathway; N(2)-formyl-N(1)-(5-phospho-D-ribosyl)glycinamide from N(1)-(5-phospho-D-ribosyl)glycinamide (formate route): step 1/1. Functionally, involved in the de novo purine biosynthesis. Catalyzes the transfer of formate to 5-phospho-ribosyl-glycinamide (GAR), producing 5-phospho-ribosyl-N-formylglycinamide (FGAR). Formate is provided by PurU via hydrolysis of 10-formyl-tetrahydrofolate. The sequence is that of Formate-dependent phosphoribosylglycinamide formyltransferase from Burkholderia cenocepacia (strain HI2424).